The following is a 191-amino-acid chain: Putative acetyltransferase DDB_G0280825 (191 aa).

Belongs to the transferase hexapeptide repeat family.

In Dictyostelium discoideum (Social amoeba), this protein is Putative acetyltransferase DDB_G0280825.